A 560-amino-acid polypeptide reads, in one-letter code: Dihydroxy-acid dehydratase (560 aa).

[2Fe-2S] cluster is bound at residue cysteine 50. Position 82 (aspartate 82) interacts with Mg(2+). Residue cysteine 123 coordinates [2Fe-2S] cluster. Mg(2+) contacts are provided by aspartate 124 and lysine 125. The residue at position 125 (lysine 125) is an N6-carboxylysine. Cysteine 195 provides a ligand contact to [2Fe-2S] cluster. Glutamate 446 serves as a coordination point for Mg(2+). Serine 472 acts as the Proton acceptor in catalysis.

It belongs to the IlvD/Edd family. As to quaternary structure, homodimer. Requires [2Fe-2S] cluster as cofactor. Mg(2+) serves as cofactor.

The enzyme catalyses (2R)-2,3-dihydroxy-3-methylbutanoate = 3-methyl-2-oxobutanoate + H2O. It carries out the reaction (2R,3R)-2,3-dihydroxy-3-methylpentanoate = (S)-3-methyl-2-oxopentanoate + H2O. It functions in the pathway amino-acid biosynthesis; L-isoleucine biosynthesis; L-isoleucine from 2-oxobutanoate: step 3/4. The protein operates within amino-acid biosynthesis; L-valine biosynthesis; L-valine from pyruvate: step 3/4. In terms of biological role, functions in the biosynthesis of branched-chain amino acids. Catalyzes the dehydration of (2R,3R)-2,3-dihydroxy-3-methylpentanoate (2,3-dihydroxy-3-methylvalerate) into 2-oxo-3-methylpentanoate (2-oxo-3-methylvalerate) and of (2R)-2,3-dihydroxy-3-methylbutanoate (2,3-dihydroxyisovalerate) into 2-oxo-3-methylbutanoate (2-oxoisovalerate), the penultimate precursor to L-isoleucine and L-valine, respectively. This Leptothrix cholodnii (strain ATCC 51168 / LMG 8142 / SP-6) (Leptothrix discophora (strain SP-6)) protein is Dihydroxy-acid dehydratase.